The primary structure comprises 42 residues: Potassium channel toxin gamma-KTx 1.5 (42 aa).

4 disulfide bridges follow: Cys-5-Cys-23, Cys-11-Cys-34, Cys-20-Cys-39, and Cys-24-Cys-41.

It belongs to the ergtoxin family. Gamma-KTx 1 subfamily. In terms of tissue distribution, expressed by the venom gland.

It is found in the secreted. In terms of biological role, blocks Kv11/ERG potassium channels. The chain is Potassium channel toxin gamma-KTx 1.5 from Centruroides limpidus (Mexican scorpion).